The primary structure comprises 227 residues: Ribonuclease HII (227 aa).

In terms of domain architecture, RNase H type-2 spans 1–210; that stretch reads MKLAGIDEAG…LKKIEEKLAK (210 aa). A divalent metal cation is bound by residues aspartate 7, glutamate 8, and aspartate 105.

The protein belongs to the RNase HII family. Requires Mn(2+) as cofactor. Mg(2+) serves as cofactor.

Its subcellular location is the cytoplasm. The catalysed reaction is Endonucleolytic cleavage to 5'-phosphomonoester.. In terms of biological role, endonuclease that specifically degrades the RNA of RNA-DNA hybrids. In Thermococcus onnurineus (strain NA1), this protein is Ribonuclease HII.